The chain runs to 115 residues: Large ribosomal subunit protein uL22 (115 aa).

It belongs to the universal ribosomal protein uL22 family. As to quaternary structure, part of the 50S ribosomal subunit.

In terms of biological role, this protein binds specifically to 23S rRNA; its binding is stimulated by other ribosomal proteins, e.g. L4, L17, and L20. It is important during the early stages of 50S assembly. It makes multiple contacts with different domains of the 23S rRNA in the assembled 50S subunit and ribosome. The globular domain of the protein is located near the polypeptide exit tunnel on the outside of the subunit, while an extended beta-hairpin is found that lines the wall of the exit tunnel in the center of the 70S ribosome. This chain is Large ribosomal subunit protein uL22, found in Coxiella burnetii (strain CbuG_Q212) (Coxiella burnetii (strain Q212)).